We begin with the raw amino-acid sequence, 441 residues long: E3 ubiquitin-protein ligase APD1 (441 aa).

The next 2 membrane-spanning stretches (helical) occupy residues 60–80 (SNLYCFSLALLIWFFASFILI) and 305–325 (IAYVIGTGVVICFMLVAIQFC). An RING-type zinc finger spans residues 390–429 (CAICFDVPRDCFFLPCGHSVSCYECGTTMQEADGSCPICR).

As to expression, expressed in the shoot apical meristems (SAM), root tips and inflorescences, and, at low levels, in floral buds and pollen.

Its subcellular location is the endomembrane system. The protein localises to the vacuole membrane. It carries out the reaction S-ubiquitinyl-[E2 ubiquitin-conjugating enzyme]-L-cysteine + [acceptor protein]-L-lysine = [E2 ubiquitin-conjugating enzyme]-L-cysteine + N(6)-ubiquitinyl-[acceptor protein]-L-lysine.. It functions in the pathway protein modification; protein ubiquitination. Functionally, involved in pollen mitosis II (PMII) regulation during male gametogenesis. This chain is E3 ubiquitin-protein ligase APD1, found in Arabidopsis thaliana (Mouse-ear cress).